Here is a 409-residue protein sequence, read N- to C-terminus: MASGKTTGKTDAPAPVIKLGGPKPPKVGSSGNASWFQALKAKKLNSPPPKFEGSGVPDNENLKLSQQHGYWRRQARYKPGKGGRKSVPDAWYFYYTGTGPAADLNWGYSQDGIVWVSAKGADTKSRSNQGTRDPDKFDQYPLRFSDGGPDGNFRWDFIPINRGRSGRSTAASSAASSRAPSRDGSRGRRSGAEDDLIARAAKIIQDQQKKGSRITKAKADEMAHRRYCKRTIPPGYKVDQVFGPRTKCKEGNFGDDKMNEEGIKDGRVTAMLNLVPSSHACLFGSRVTPKLQPDGLHLRFEFTTVVSRDDPQFDNYVKICDQCVDGVGTRPKDDEPRPKSRPNSRPATRTSSPAPRQQPQKKEKKSKKQDDEVDKALTSDEERNNAQLEFDDEPKVINWGESALGENEL.

4 disordered regions span residues 1-32, 44-63, 120-145, and 164-193; these read MASG…SSGN, LNSP…ENLK, GADT…LRFS, and RSGR…SGAE. A compositionally biased stretch (low complexity) spans 15-31; that stretch reads PVIKLGGPKPPKVGSSG. The RNA-binding stretch occupies residues 29 to 160; sequence SSGNASWFQA…GNFRWDFIPI (132 aa). In terms of domain architecture, CoV N NTD spans 31 to 156; that stretch reads GNASWFQALK…GGPDGNFRWD (126 aa). Positions 164–179 are enriched in low complexity; that stretch reads RSGRSTAASSAASSRA. The span at 180–192 shows a compositional bias: basic and acidic residues; the sequence is PSRDGSRGRRSGA. Phosphoserine; by host is present on Ser-190. The 117-residue stretch at 215–331 folds into the CoV N CTD domain; sequence TKAKADEMAH…QCVDGVGTRP (117 aa). The segment at 226 to 333 is dimerization; that stretch reads RYCKRTIPPG…VDGVGTRPKD (108 aa). Cys-320 and Cys-323 are joined by a disulfide. The interval 327–409 is disordered; that stretch reads VGTRPKDDEP…GESALGENEL (83 aa). Over residues 341–355 the composition is skewed to polar residues; that stretch reads RPNSRPATRTSSPAP. Positions 368-384 are enriched in basic and acidic residues; it reads KQDDEVDKALTSDEERN. Thr-378 carries the post-translational modification Phosphothreonine; by host. Ser-379 carries the post-translational modification Phosphoserine; by host.

Belongs to the gammacoronavirus nucleocapsid protein family. Homooligomer. Both monomeric and oligomeric forms interact with RNA. Interacts with protein M. Interacts with NSP3; this interaction serves to tether the genome to the newly translated replicase-transcriptase complex at a very early stage of infection. ADP-ribosylated. The ADP-ribosylation is retained in the virion during infection. In terms of processing, phosphorylated on serine and threonine residues.

It is found in the virion. It localises to the host endoplasmic reticulum-Golgi intermediate compartment. Its subcellular location is the host Golgi apparatus. Its function is as follows. Packages the positive strand viral genome RNA into a helical ribonucleocapsid (RNP) and plays a fundamental role during virion assembly through its interactions with the viral genome and membrane protein M. Plays an important role in enhancing the efficiency of subgenomic viral RNA transcription as well as viral replication. This Avian infectious bronchitis virus (strain D1466) (IBV) protein is Nucleoprotein.